Here is a 541-residue protein sequence, read N- to C-terminus: Arginine--tRNA ligase (541 aa).

Residues Ala119–His129 carry the 'HIGH' region motif.

Belongs to the class-I aminoacyl-tRNA synthetase family. As to quaternary structure, monomer.

The protein localises to the cytoplasm. The catalysed reaction is tRNA(Arg) + L-arginine + ATP = L-arginyl-tRNA(Arg) + AMP + diphosphate. This is Arginine--tRNA ligase (argS) from Helicobacter pylori (strain ATCC 700392 / 26695) (Campylobacter pylori).